Consider the following 649-residue polypeptide: Acetyl-coenzyme A synthetase (649 aa).

CoA-binding positions include 189-192 (RGGK), threonine 311, and asparagine 335. ATP-binding positions include 387–389 (GEP), 411–416 (DTWWQT), aspartate 500, and arginine 515. Serine 523 is a CoA binding site. ATP is bound at residue arginine 526. 3 residues coordinate Mg(2+): valine 537, histidine 539, and valine 542. A CoA-binding site is contributed by arginine 584. Residue lysine 609 is modified to N6-acetyllysine.

Belongs to the ATP-dependent AMP-binding enzyme family. It depends on Mg(2+) as a cofactor. In terms of processing, acetylated. Deacetylation by the SIR2-homolog deacetylase activates the enzyme.

The enzyme catalyses acetate + ATP + CoA = acetyl-CoA + AMP + diphosphate. In terms of biological role, catalyzes the conversion of acetate into acetyl-CoA (AcCoA), an essential intermediate at the junction of anabolic and catabolic pathways. AcsA undergoes a two-step reaction. In the first half reaction, AcsA combines acetate with ATP to form acetyl-adenylate (AcAMP) intermediate. In the second half reaction, it can then transfer the acetyl group from AcAMP to the sulfhydryl group of CoA, forming the product AcCoA. This is Acetyl-coenzyme A synthetase from Sinorhizobium medicae (strain WSM419) (Ensifer medicae).